Consider the following 342-residue polypeptide: Glucokinase (342 aa).

7-12 (GDIGGT) is an ATP binding site.

The protein belongs to the bacterial glucokinase family.

Its subcellular location is the cytoplasm. The enzyme catalyses D-glucose + ATP = D-glucose 6-phosphate + ADP + H(+). In Nostoc sp. (strain PCC 7120 / SAG 25.82 / UTEX 2576), this protein is Glucokinase.